The primary structure comprises 57 residues: Small ribosomal subunit protein eS27 (57 aa).

Zn(2+)-binding residues include Cys10, Cys13, Cys29, and Cys32. Residues Cys10–Cys32 form a C4-type zinc finger.

It belongs to the eukaryotic ribosomal protein eS27 family. Part of the 30S ribosomal subunit. Requires Zn(2+) as cofactor.

This Halobacterium salinarum (strain ATCC 29341 / DSM 671 / R1) protein is Small ribosomal subunit protein eS27.